Reading from the N-terminus, the 200-residue chain is Holliday junction branch migration complex subunit RuvA (200 aa).

The domain I stretch occupies residues 1–63 (MIAFVRGQVA…EDSLTLFGFA (63 aa)). The tract at residues 64-142 (DEDEKQTFEL…APTGAGRSAG (79 aa)) is domain II. The segment at 142-146 (GVPAP) is flexible linker. The interval 147 to 200 (AGAVWRDQVHQGLVGLGWPVRDAEKAVAAVAPEAGDVPDVAALLRAALRTLSKA) is domain III.

It belongs to the RuvA family. As to quaternary structure, homotetramer. Forms an RuvA(8)-RuvB(12)-Holliday junction (HJ) complex. HJ DNA is sandwiched between 2 RuvA tetramers; dsDNA enters through RuvA and exits via RuvB. An RuvB hexamer assembles on each DNA strand where it exits the tetramer. Each RuvB hexamer is contacted by two RuvA subunits (via domain III) on 2 adjacent RuvB subunits; this complex drives branch migration. In the full resolvosome a probable DNA-RuvA(4)-RuvB(12)-RuvC(2) complex forms which resolves the HJ.

It is found in the cytoplasm. In terms of biological role, the RuvA-RuvB-RuvC complex processes Holliday junction (HJ) DNA during genetic recombination and DNA repair, while the RuvA-RuvB complex plays an important role in the rescue of blocked DNA replication forks via replication fork reversal (RFR). RuvA specifically binds to HJ cruciform DNA, conferring on it an open structure. The RuvB hexamer acts as an ATP-dependent pump, pulling dsDNA into and through the RuvAB complex. HJ branch migration allows RuvC to scan DNA until it finds its consensus sequence, where it cleaves and resolves the cruciform DNA. This is Holliday junction branch migration complex subunit RuvA from Nocardioides sp. (strain ATCC BAA-499 / JS614).